The chain runs to 67 residues: Conotoxin Pu5.1 (67 aa).

Positions Met-1–Ala-22 are cleaved as a signal peptide. Residues Arg-23–Arg-51 constitute a propeptide that is removed on maturation. Residue Trp-63 is modified to Tryptophan amide.

The protein belongs to the conotoxin T superfamily. Post-translationally, contains 2 disulfide bonds that can be either 'C1-C3, C2-C4' or 'C1-C4, C2-C3', since these disulfide connectivities have been observed for conotoxins with cysteine framework V (for examples, see AC P0DQQ7 and AC P81755). Expressed by the venom duct.

It localises to the secreted. This chain is Conotoxin Pu5.1, found in Conus pulicarius (Flea-bitten cone).